The sequence spans 193 residues: Coiled-coil domain-containing protein 184 (193 aa).

Positions 39 to 68 (GMKELMEHLKAQLQALFEDVRAMRGALDEQ) form a coiled coil. A disordered region spans residues 101-176 (GLGVAGGKGS…LGENGPLVEP (76 aa)). A compositionally biased stretch (acidic residues) spans 135-146 (PDEEDEEEEEEK).

The protein is Coiled-coil domain-containing protein 184 (Ccdc184) of Rattus norvegicus (Rat).